The sequence spans 125 residues: Protein ApaG (125 aa).

Residues 1-125 (MIDSPRVCVQ…FRLAVPTFIH (125 aa)) enclose the ApaG domain.

The chain is Protein ApaG from Enterobacter sp. (strain 638).